Reading from the N-terminus, the 438-residue chain is UDP-N-acetylmuramoylalanine--D-glutamate ligase (438 aa).

112–118 (GSNGKST) contributes to the ATP binding site.

Belongs to the MurCDEF family.

It is found in the cytoplasm. The enzyme catalyses UDP-N-acetyl-alpha-D-muramoyl-L-alanine + D-glutamate + ATP = UDP-N-acetyl-alpha-D-muramoyl-L-alanyl-D-glutamate + ADP + phosphate + H(+). Its pathway is cell wall biogenesis; peptidoglycan biosynthesis. Its function is as follows. Cell wall formation. Catalyzes the addition of glutamate to the nucleotide precursor UDP-N-acetylmuramoyl-L-alanine (UMA). The protein is UDP-N-acetylmuramoylalanine--D-glutamate ligase of Yersinia pestis bv. Antiqua (strain Antiqua).